A 2631-amino-acid polypeptide reads, in one-letter code: Cyclic GMP-binding protein C (2631 aa).

LRR repeat units follow at residues 170 to 194 (TAQIDIEFHLSYTQLVTLPPSIFSL), 196 to 217 (WIQKLVLTHHNIKTLSEDIGKL), 218 to 240 (QQLQVLVLENNRLINLPQSIGDL), 242 to 262 (NLKRLEVDNNHLVSLCSLERL), 263 to 285 (SKLEVLSVNNNKLTLLPTSIASL), and 287 to 308 (SLKTLNIKSNPIITPPSTVVSK). One can recognise a Roc domain in the interval 323-515 (GARPCLRSKL…QLIEDIIKTQ (193 aa)). GTP-binding positions include 336–343 (GDPGVGKT), 402–406 (DIANQ), and 458–461 (THID). Residues 523–741 (PSSFFTLEEA…ESCQKRAVIL (219 aa)) enclose the COR domain. The region spanning 878 to 1172 (VKINKEVGRG…KKKFAPLPFT (295 aa)) is the Protein kinase domain. ATP contacts are provided by residues 884 to 892 (VGRGAFGIV) and Lys-905. The active-site Proton acceptor is Asp-1023. The segment covering 1225–1250 (ISLTSSGTSPTNSPVGGLLSQSLTQP) has biased composition (polar residues). Disordered regions lie at residues 1225 to 1263 (ISLTSSGTSPTNSPVGGLLSQSLTQPITSGGSTSGILST) and 1387 to 1418 (SSATLKSEHISTRRRSDTAGKNGVPPHWRNSV). Low complexity predominate over residues 1251 to 1263 (ITSGGSTSGILST). The N-terminal Ras-GEF domain occupies 1366-1539 (SVSIIIAATM…QIYGTLTTHE (174 aa)). A compositionally biased stretch (basic and acidic residues) spans 1392-1404 (KSEHISTRRRSDT). Residues 1620–1706 (PLLGITVKEK…SPTSFYMFLE (87 aa)) form the DEP domain. The Ras-GEF domain occupies 1708–1971 (DPELIARQYT…DLKALDSLQI (264 aa)). A disordered region spans residues 1989–2013 (GTTNDDKEKGDENGGGLTSSNFFGN). 2014–2133 (GSDELTERDW…AKFYKIMANQ (120 aa)) serves as a coordination point for a nucleoside 3',5'-cyclic phosphate. 3 disordered regions span residues 2142 to 2180 (PWSKPKNTTGGSSSSNQSAGPDNILGTTPTGISSSGGGL), 2192 to 2239 (MSLS…TTTD), and 2263 to 2346 (SANL…GQQP). Over residues 2144-2174 (SKPKNTTGGSSSSNQSAGPDNILGTTPTGIS) the composition is skewed to low complexity. A compositionally biased stretch (pro residues) spans 2212-2221 (LPSPPAPLQS). The span at 2222–2238 (PPTSGISSPTTTTSTTT) shows a compositional bias: low complexity. Over residues 2287-2299 (TINKDPHQRDSGS) the composition is skewed to basic and acidic residues. The segment covering 2321–2336 (GSISYLGRTQTSTSPL) has biased composition (polar residues). A GRAM domain is found at 2354-2414 (EFCQRFALVD…KNIDKLICIN (61 aa)). 2490 to 2616 (GDELTKEDWE…ASKWFKYLAT (127 aa)) serves as a coordination point for a nucleoside 3',5'-cyclic phosphate.

Belongs to the protein kinase superfamily. TKL Ser/Thr protein kinase family. ROCO subfamily.

The enzyme catalyses L-seryl-[protein] + ATP = O-phospho-L-seryl-[protein] + ADP + H(+). It carries out the reaction L-threonyl-[protein] + ATP = O-phospho-L-threonyl-[protein] + ADP + H(+). Promotes the exchange of Ras-bound GDP by GTP. Required for cyclic GMP-mediated chemotaxis, polarity. Plays a key role in cyclic AMP-induced myosin II translocation to the cortex. Also involved in the phosphorylation of mlkA and mlcR, either directly or via an intermediate kinase. The polypeptide is Cyclic GMP-binding protein C (gbpC) (Dictyostelium discoideum (Social amoeba)).